The chain runs to 187 residues: Ribonuclease HII (187 aa).

The RNase H type-2 domain maps to 1 to 187 (MIILGIDEAG…YKPVQVLLNE (187 aa)). The a divalent metal cation site is built by Asp7, Glu8, and Asp99.

This sequence belongs to the RNase HII family. Mn(2+) serves as cofactor. The cofactor is Mg(2+).

It is found in the cytoplasm. It carries out the reaction Endonucleolytic cleavage to 5'-phosphomonoester.. Endonuclease that specifically degrades the RNA of RNA-DNA hybrids. In Francisella tularensis subsp. mediasiatica (strain FSC147), this protein is Ribonuclease HII.